Consider the following 1009-residue polypeptide: 2-oxoglutarate dehydrogenase, mitochondrial (1009 aa).

A mitochondrion-targeting transit peptide spans 1 to 39; that stretch reads MLRFIPSSAKARALRRSAVTAYRLNRLTCLSSLQQNRTF. Residues R305, D404, N437, I439, and Q669 each contribute to the thiamine diphosphate site. Residues D404, N437, and I439 each contribute to the Mg(2+) site.

It belongs to the alpha-ketoglutarate dehydrogenase family. Requires thiamine diphosphate as cofactor. Mg(2+) is required as a cofactor.

It is found in the mitochondrion matrix. The enzyme catalyses N(6)-[(R)-lipoyl]-L-lysyl-[protein] + 2-oxoglutarate + H(+) = N(6)-[(R)-S(8)-succinyldihydrolipoyl]-L-lysyl-[protein] + CO2. Its activity is regulated as follows. Catabolite repressed. The 2-oxoglutarate dehydrogenase complex catalyzes the overall conversion of 2-oxoglutarate to succinyl-CoA and CO(2). It contains multiple copies of three enzymatic components: 2-oxoglutarate dehydrogenase (E1), dihydrolipoamide succinyltransferase (E2) and lipoamide dehydrogenase (E3). In Schizosaccharomyces pombe (strain 972 / ATCC 24843) (Fission yeast), this protein is 2-oxoglutarate dehydrogenase, mitochondrial (kgd1).